The sequence spans 267 residues: Tryptophan synthase alpha chain (267 aa).

Residues Glu-47 and Asp-58 each act as proton acceptor in the active site.

The protein belongs to the TrpA family. Tetramer of two alpha and two beta chains.

The catalysed reaction is (1S,2R)-1-C-(indol-3-yl)glycerol 3-phosphate + L-serine = D-glyceraldehyde 3-phosphate + L-tryptophan + H2O. Its pathway is amino-acid biosynthesis; L-tryptophan biosynthesis; L-tryptophan from chorismate: step 5/5. Functionally, the alpha subunit is responsible for the aldol cleavage of indoleglycerol phosphate to indole and glyceraldehyde 3-phosphate. This is Tryptophan synthase alpha chain from Prosthecochloris aestuarii (strain DSM 271 / SK 413).